The chain runs to 143 residues: Large ribosomal subunit protein uL11 (143 aa).

This sequence belongs to the universal ribosomal protein uL11 family. As to quaternary structure, part of the ribosomal stalk of the 50S ribosomal subunit. Interacts with L10 and the large rRNA to form the base of the stalk. L10 forms an elongated spine to which L12 dimers bind in a sequential fashion forming a multimeric L10(L12)X complex. Post-translationally, one or more lysine residues are methylated.

Forms part of the ribosomal stalk which helps the ribosome interact with GTP-bound translation factors. The sequence is that of Large ribosomal subunit protein uL11 from Bordetella pertussis (strain Tohama I / ATCC BAA-589 / NCTC 13251).